The following is an 818-amino-acid chain: Piwi-like protein (818 aa).

One can recognise a PAZ domain in the interval 220–339; that stretch reads RINRVLNDNS…ITGELCFLCG (120 aa). The region spanning 501–800 is the Piwi domain; sequence KIALVFVPDD…LAELIGKVHK (300 aa).

It belongs to the argonaute family. Piwi subfamily.

The chain is Piwi-like protein (iwi) from Dugesia japonica (Planarian).